Reading from the N-terminus, the 234-residue chain is tRNA (guanine-N(1)-)-methyltransferase (234 aa).

Residues glycine 110 and 134–139 (IGDYVL) each bind S-adenosyl-L-methionine.

This sequence belongs to the RNA methyltransferase TrmD family. As to quaternary structure, homodimer.

It is found in the cytoplasm. It catalyses the reaction guanosine(37) in tRNA + S-adenosyl-L-methionine = N(1)-methylguanosine(37) in tRNA + S-adenosyl-L-homocysteine + H(+). Its function is as follows. Specifically methylates guanosine-37 in various tRNAs. This Tropheryma whipplei (strain TW08/27) (Whipple's bacillus) protein is tRNA (guanine-N(1)-)-methyltransferase.